The primary structure comprises 178 residues: Alkyl hydroperoxide reductase AhpD (178 aa).

The active-site Proton donor is Cys-130. A disulfide bond links Cys-130 and Cys-133. Cys-133 acts as the Cysteine sulfenic acid (-SOH) intermediate in catalysis.

It belongs to the AhpD family. In terms of assembly, homotrimer.

It catalyses the reaction N(6)-[(R)-dihydrolipoyl]-L-lysyl-[lipoyl-carrier protein] + a hydroperoxide = N(6)-[(R)-lipoyl]-L-lysyl-[lipoyl-carrier protein] + an alcohol + H2O. Antioxidant protein with alkyl hydroperoxidase activity. Required for the reduction of the AhpC active site cysteine residues and for the regeneration of the AhpC enzyme activity. This chain is Alkyl hydroperoxide reductase AhpD, found in Mycobacterium marinum (strain ATCC BAA-535 / M).